We begin with the raw amino-acid sequence, 182 residues long: Superoxide dismutase [Cu-Zn] (182 aa).

A signal peptide spans 1 to 19 (MFRTLTVVPLLALGLSLSA). The N-palmitoyl cysteine moiety is linked to residue cysteine 20. Cysteine 20 is lipidated: S-diacylglycerol cysteine. Residues histidine 69, histidine 71, and histidine 95 each contribute to the Cu cation site. Cysteine 76 and cysteine 175 are joined by a disulfide. A disordered region spans residues 91–118 (AAGGHFDPGASHNHDGPHARNDQGHGGD). 4 residues coordinate Zn(2+): histidine 95, histidine 104, histidine 115, and aspartate 118. The span at 102 to 115 (HNHDGPHARNDQGH) shows a compositional bias: basic and acidic residues.

It belongs to the Cu-Zn superoxide dismutase family. It depends on Cu cation as a cofactor. Zn(2+) serves as cofactor.

Its subcellular location is the cell membrane. It carries out the reaction 2 superoxide + 2 H(+) = H2O2 + O2. In terms of biological role, destroys radicals which are normally produced within the cells and which are toxic to biological systems. In Deinococcus radiodurans (strain ATCC 13939 / DSM 20539 / JCM 16871 / CCUG 27074 / LMG 4051 / NBRC 15346 / NCIMB 9279 / VKM B-1422 / R1), this protein is Superoxide dismutase [Cu-Zn] (sodC).